A 121-amino-acid polypeptide reads, in one-letter code: uncharacterized protein (121 aa).

This is an uncharacterized protein from Bacillus subtilis (strain 168).